Reading from the N-terminus, the 790-residue chain is LPS-assembly protein LptD (790 aa).

An N-terminal signal peptide occupies residues 1-20 (MRMLRWLILSAFSVAGAVQA).

The protein belongs to the LptD family. As to quaternary structure, component of the lipopolysaccharide transport and assembly complex. Interacts with LptE and LptA.

The protein resides in the cell outer membrane. Its function is as follows. Together with LptE, is involved in the assembly of lipopolysaccharide (LPS) at the surface of the outer membrane. In Bordetella bronchiseptica (strain ATCC BAA-588 / NCTC 13252 / RB50) (Alcaligenes bronchisepticus), this protein is LPS-assembly protein LptD.